Here is a 327-residue protein sequence, read N- to C-terminus: GTPase Obg (327 aa).

The Obg domain occupies 1–159 (MQFIDQANII…WEVQLELKLL (159 aa)). The region spanning 160–327 (AEVGIIGLPN…SLLSEVWKRI (168 aa)) is the OBG-type G domain. Residues 166–173 (GLPNAGKS), 191–195 (FTTLI), 213–216 (DIPG), 280–283 (NKME), and 309–311 (SSS) contribute to the ATP site. Residues serine 173 and threonine 193 each contribute to the Mg(2+) site.

Belongs to the TRAFAC class OBG-HflX-like GTPase superfamily. OBG GTPase family. As to quaternary structure, monomer. Mg(2+) serves as cofactor.

It localises to the cytoplasm. Its function is as follows. An essential GTPase which binds GTP, GDP and possibly (p)ppGpp with moderate affinity, with high nucleotide exchange rates and a fairly low GTP hydrolysis rate. Plays a role in control of the cell cycle, stress response, ribosome biogenesis and in those bacteria that undergo differentiation, in morphogenesis control. The protein is GTPase Obg of Prochlorococcus marinus (strain MIT 9215).